A 270-amino-acid chain; its full sequence is 4-hydroxy-tetrahydrodipicolinate reductase (270 aa).

NAD(+)-binding positions include 11-16 (GCQGRM) and Glu37. An NADP(+)-binding site is contributed by Arg38. Residues 101–103 (GTT) and 125–128 (ASNF) contribute to the NAD(+) site. The active-site Proton donor/acceptor is His158. Residue His159 coordinates (S)-2,3,4,5-tetrahydrodipicolinate. The Proton donor role is filled by Lys162. 168–169 (GT) contacts (S)-2,3,4,5-tetrahydrodipicolinate.

The protein belongs to the DapB family.

Its subcellular location is the cytoplasm. The catalysed reaction is (S)-2,3,4,5-tetrahydrodipicolinate + NAD(+) + H2O = (2S,4S)-4-hydroxy-2,3,4,5-tetrahydrodipicolinate + NADH + H(+). The enzyme catalyses (S)-2,3,4,5-tetrahydrodipicolinate + NADP(+) + H2O = (2S,4S)-4-hydroxy-2,3,4,5-tetrahydrodipicolinate + NADPH + H(+). It functions in the pathway amino-acid biosynthesis; L-lysine biosynthesis via DAP pathway; (S)-tetrahydrodipicolinate from L-aspartate: step 4/4. Functionally, catalyzes the conversion of 4-hydroxy-tetrahydrodipicolinate (HTPA) to tetrahydrodipicolinate. This Tolumonas auensis (strain DSM 9187 / NBRC 110442 / TA 4) protein is 4-hydroxy-tetrahydrodipicolinate reductase.